Consider the following 443-residue polypeptide: Methyl-coenzyme M reductase II subunit beta (443 aa).

Tyr367 provides a ligand contact to coenzyme M. Gly369 is a binding site for coenzyme B.

The protein belongs to the methyl-coenzyme M reductase beta subunit family. As to quaternary structure, MCR is a hexamer of two alpha, two beta, and two gamma chains, forming a dimer of heterotrimers. Coenzyme F430 is required as a cofactor.

The enzyme catalyses coenzyme B + methyl-coenzyme M = methane + coenzyme M-coenzyme B heterodisulfide. It functions in the pathway one-carbon metabolism; methyl-coenzyme M reduction; methane from methyl-coenzyme M: step 1/1. Its function is as follows. Component of the methyl-coenzyme M reductase (MCR) I that catalyzes the reductive cleavage of methyl-coenzyme M (CoM-S-CH3 or 2-(methylthio)ethanesulfonate) using coenzyme B (CoB or 7-mercaptoheptanoylthreonine phosphate) as reductant which results in the production of methane and the mixed heterodisulfide of CoB and CoM (CoM-S-S-CoB). This is the final step in methanogenesis. This Methanothermobacter marburgensis (strain ATCC BAA-927 / DSM 2133 / JCM 14651 / NBRC 100331 / OCM 82 / Marburg) (Methanobacterium thermoautotrophicum) protein is Methyl-coenzyme M reductase II subunit beta.